The sequence spans 99 residues: HssA/B-like protein 41 (99 aa).

The interval 1 to 29 (MTLFSSISSISNPMTSSKSSISSFGSGTS) is disordered.

This sequence belongs to the hssA/B family.

This chain is HssA/B-like protein 41 (hssl41), found in Dictyostelium discoideum (Social amoeba).